The following is a 439-amino-acid chain: L-tryptophan decarboxylase (439 aa).

The protein belongs to the phosphatidylserine decarboxylase family.

It carries out the reaction L-tryptophan + H(+) = tryptamine + CO2. It functions in the pathway secondary metabolite biosynthesis. Functionally, L-tryptophan decarboxylase; part of the gene cluster that mediates the biosynthesis of psilocybin, a psychotropic tryptamine-derived natural product. The first step in the pathway is the decarboxylation of L-tryptophan to tryptamine by the decarboxylase psiD. 4-hydroxy-L-tryptophan is accepted as substrate by psiD as well. The cytochrome P450 monooxygenase psiH then converts tryptamine to 4-hydroxytryptamine. The kinase psiK catalyzes the 4-O-phosphorylation step by converting 4-hydroxytryptamine into norbaeocystin. The methyltransferase psiM then catalyzes iterative methyl transfer to the amino group of norbaeocystin to yield psilocybin via a monomethylated intermediate, baeocystin. 4-hydroxy-6-methyl-l-tryptophancan also be converted the decarboxylase PsiD, kinase PsiK, and methyltransferase PsiM into respectively 6-methyl-norbaeocystin, 6-methylbaeocystin, and 6-methylpsilocybin. This chain is L-tryptophan decarboxylase, found in Psilocybe cubensis (Psychedelic mushroom).